We begin with the raw amino-acid sequence, 382 residues long: Mannitol-1-phosphate 5-dehydrogenase (382 aa).

3–14 (ALHFGAGNIGRG) provides a ligand contact to NAD(+).

Belongs to the mannitol dehydrogenase family.

It carries out the reaction D-mannitol 1-phosphate + NAD(+) = beta-D-fructose 6-phosphate + NADH + H(+). In Klebsiella pneumoniae, this protein is Mannitol-1-phosphate 5-dehydrogenase (mtlD).